The sequence spans 957 residues: Histone-lysine N-methyltransferase, H3 lysine-9 specific SUVH3 (957 aa).

One can recognise a YDG domain in the interval 73–243 (GHPPGVALGD…PQVCKFLMHG (171 aa)). Residues 182 to 209 (EAGGGEGGGGGEGGGGAKKGKGGKGGGK) form a disordered region. Gly residues predominate over residues 183 to 198 (AGGGEGGGGGEGGGGA). A Pre-SET domain is found at 319–441 (DVSGGQEAVP…HECGDGCSAK (123 aa)). The SET domain maps to 455–920 (LPLEVFMTES…QLEELSYNYG (466 aa)). Disordered stretches follow at residues 552 to 595 (DAAR…GGAE), 611 to 647 (AAGT…SSGA), and 783 to 805 (PPAL…GGGG). Low complexity predominate over residues 560–578 (QQPQQQQPQQQQQQPAAGG). Residues 793 to 805 (GNGGTTGSGGGGG) are compositionally biased toward gly residues. Residues 941–957 (FVMQCNCGAVGCIGNLM) form the Post-SET domain.

The protein belongs to the class V-like SAM-binding methyltransferase superfamily. Histone-lysine methyltransferase family. Suvar3-9 subfamily.

The protein localises to the nucleus. Its subcellular location is the chromosome. The catalysed reaction is L-lysyl(9)-[histone H3] + S-adenosyl-L-methionine = N(6)-methyl-L-lysyl(9)-[histone H3] + S-adenosyl-L-homocysteine + H(+). Histone methyltransferase. Monomethylates specifically 'Lys-9' of histone H3. H3 'Lys-9Me1' (H3K9me1) functions as an epigenetic mark of repressed chromatin. The protein is Histone-lysine N-methyltransferase, H3 lysine-9 specific SUVH3 (SUVH3) of Chlamydomonas reinhardtii (Chlamydomonas smithii).